A 73-amino-acid chain; its full sequence is Ocellatin-PT6 (73 aa).

A signal peptide spans 1–22 (MAFLKKSLFLVLFLGLVSLSIC). Residues 23-39 (DEEKRQDEDDDDDDDEE) constitute a propeptide that is removed on maturation.

In terms of tissue distribution, expressed by the skin glands.

It localises to the secreted. In terms of biological role, has antibacterial activity against Gram-negative bacterium E.coli ATCC 25922 (MIC=120 uM) but not against S.pneumoniae ATCC 700603, S.choleraesuis ATCC 14028 or against Gram-positive bacterium S.aureus ATCC 29313. Shows no hemolytic activity and no cytotoxicity. In Leptodactylus pustulatus (Ceara white-lipped frog), this protein is Ocellatin-PT6.